Here is a 125-residue protein sequence, read N- to C-terminus: Translation initiation factor 5A (125 aa).

K36 is subject to Hypusine.

Belongs to the eIF-5A family.

The protein localises to the cytoplasm. Functionally, functions by promoting the formation of the first peptide bond. This Halorubrum lacusprofundi (strain ATCC 49239 / DSM 5036 / JCM 8891 / ACAM 34) protein is Translation initiation factor 5A (eIF5A).